The primary structure comprises 203 residues: Glycerol-3-phosphate acyltransferase (203 aa).

Transmembrane regions (helical) follow at residues methionine 1–isoleucine 21, tryptophan 84–glycine 104, isoleucine 117–isoleucine 137, and leucine 157–leucine 179.

The protein belongs to the PlsY family. Probably interacts with PlsX.

It is found in the cell inner membrane. It carries out the reaction an acyl phosphate + sn-glycerol 3-phosphate = a 1-acyl-sn-glycero-3-phosphate + phosphate. The protein operates within lipid metabolism; phospholipid metabolism. Catalyzes the transfer of an acyl group from acyl-phosphate (acyl-PO(4)) to glycerol-3-phosphate (G3P) to form lysophosphatidic acid (LPA). This enzyme utilizes acyl-phosphate as fatty acyl donor, but not acyl-CoA or acyl-ACP. This chain is Glycerol-3-phosphate acyltransferase, found in Synechococcus sp. (strain CC9605).